A 500-amino-acid chain; its full sequence is Maturase K (500 aa).

Belongs to the intron maturase 2 family. MatK subfamily.

The protein resides in the plastid. The protein localises to the chloroplast. Its function is as follows. Usually encoded in the trnK tRNA gene intron. Probably assists in splicing its own and other chloroplast group II introns. In Brasenia schreberi (Water shield), this protein is Maturase K.